The primary structure comprises 153 residues: Heavy metal-associated isoprenylated plant protein 25 (153 aa).

The region spanning 24-88 (LQTVDVRVLI…IIHRTGKRAE (65 aa)) is the HMA domain. Positions 35 and 38 each coordinate a metal cation. Cys150 carries the post-translational modification Cysteine methyl ester. Residue Cys150 is the site of S-farnesyl cysteine attachment. A propeptide spans 151–153 (VVM) (removed in mature form).

Belongs to the HIPP family. As to expression, expressed in roots, shoot apical meristem, trichomes and flower buds.

The protein localises to the membrane. Its function is as follows. Heavy-metal-binding protein. Binds cadmium. May be involved in cadmium transport and play a role in cadmium detoxification. This chain is Heavy metal-associated isoprenylated plant protein 25, found in Arabidopsis thaliana (Mouse-ear cress).